A 230-amino-acid chain; its full sequence is C-methyltransferase CouO (230 aa).

This sequence belongs to the methyltransferase superfamily.

Its pathway is antibiotic biosynthesis. Functionally, mediates C-methylation at the 8-position of the aminocoumarin moieties in coumermycin A1 in the biosynthetic pathway of coumermycin antibiotic. Active on both mono- and bis-amides for mono- and di-C-methylation adjacent to the phenolic hydroxyl before it is glycosylated by CouM. This chain is C-methyltransferase CouO (couO), found in Streptomyces rishiriensis.